Here is a 324-residue protein sequence, read N- to C-terminus: Hairy/enhancer-of-split related with YRPW motif protein 2 (324 aa).

Residues 1-34 (MKRPCEDSTSDSDMDETIDVGSENNYSGQSNGSF) form a disordered region. The segment covering 8–18 (STSDSDMDETI) has biased composition (acidic residues). Positions 22–34 (SENNYSGQSNGSF) are enriched in polar residues. The region spanning 48–103 (ARKKRRGIIEKRRRDRINNSLSELRRLVPTAFEKQGSAKLEKAEILQMTVDHLKML) is the bHLH domain. The 36-residue stretch at 122-157 (LSIGFRECLTEVARYLSSVEGLDSSDPLRVRLVSHL) folds into the Orange domain. Over residues 294–311 (SSSVSTSTTSQQSSGSSS) the composition is skewed to low complexity. The disordered stretch occupies residues 294–324 (SSSVSTSTTSQQSSGSSSKPYRPWGTEVGAF). The short motif at 314 to 317 (YRPW) is the YRPW motif element.

It belongs to the HEY family.

It is found in the nucleus. Functionally, transcriptional repressor. Downstream effector of Notch signaling which regulates cell fate choice in angioblasts. Represses the venous cell fate, thereby promoting the arterial cell fate and aorta formation. This Danio rerio (Zebrafish) protein is Hairy/enhancer-of-split related with YRPW motif protein 2 (hey2).